The following is a 224-amino-acid chain: 7-cyano-7-deazaguanine synthase (224 aa).

ATP is bound at residue 8-18; that stretch reads LSGGMDSAAVI. 4 residues coordinate Zn(2+): Cys186, Cys196, Cys199, and Cys202.

Belongs to the QueC family. It depends on Zn(2+) as a cofactor.

The catalysed reaction is 7-carboxy-7-deazaguanine + NH4(+) + ATP = 7-cyano-7-deazaguanine + ADP + phosphate + H2O + H(+). It participates in purine metabolism; 7-cyano-7-deazaguanine biosynthesis. Catalyzes the ATP-dependent conversion of 7-carboxy-7-deazaguanine (CDG) to 7-cyano-7-deazaguanine (preQ(0)). The polypeptide is 7-cyano-7-deazaguanine synthase (Xanthomonas campestris pv. campestris (strain 8004)).